The primary structure comprises 511 residues: GMP synthase [glutamine-hydrolyzing] (511 aa).

The Glutamine amidotransferase type-1 domain maps to 5-195 (AILVLDFGSQ…VFKICQAQIN (191 aa)). C82 serves as the catalytic Nucleophile. Active-site residues include H169 and E171. One can recognise a GMPS ATP-PPase domain in the interval 196 to 386 (WSLEGNLETI…LGIKKESLYR (191 aa)). Residue 223 to 229 (SGGTDSL) participates in ATP binding.

Homodimer.

It carries out the reaction XMP + L-glutamine + ATP + H2O = GMP + L-glutamate + AMP + diphosphate + 2 H(+). It functions in the pathway purine metabolism; GMP biosynthesis; GMP from XMP (L-Gln route): step 1/1. Its function is as follows. Catalyzes the synthesis of GMP from XMP. This is GMP synthase [glutamine-hydrolyzing] (guaA) from Borreliella burgdorferi (strain ATCC 35210 / DSM 4680 / CIP 102532 / B31) (Borrelia burgdorferi).